A 1205-amino-acid polypeptide reads, in one-letter code: Nitric oxide synthase 3 (1205 aa).

2 disordered regions span residues Met1–Gly20 and Cys26–Val73. Residues Ser33 to Pro47 show a composition bias toward pro residues. Zn(2+) is bound by residues Cys96 and Cys101. Residues Arg100–Lys489 are interaction with NOSIP. Ser104 contributes to the (6R)-L-erythro-5,6,7,8-tetrahydrobiopterin binding site. The residue at position 116 (Ser116) is a Phosphoserine. Cys186 is a binding site for heme b. L-arginine is bound by residues Gln250, Trp359, Tyr360, and Glu364. Residue Arg368 coordinates (6R)-L-erythro-5,6,7,8-tetrahydrobiopterin. Asn369 is a binding site for L-arginine. Residues Ala449, Trp450, and Phe463 each contribute to the (6R)-L-erythro-5,6,7,8-tetrahydrobiopterin site. Tyr478 contributes to the heme b binding site. At Thr498 the chain carries Phosphothreonine. FMN contacts are provided by Ser529, Glu530, Thr531, Arg533, Ser575, and Thr576. Phosphoserine occurs at positions 618, 636, and 641. 4 residues coordinate FMN: Ser657, Cys664, Glu690, and Gln694. NADP(+) is bound at residue Arg781. Residues Leu796 to Arg850 are disordered. His803 lines the FAD pocket. The span at Pro833–Ser844 shows a compositional bias: pro residues. FAD-binding residues include Arg939, Tyr941, Ser942, Thr957, and Ala959. NADP(+)-binding residues include Thr1018, Arg1051, Ser1080, Arg1081, Lys1087, Tyr1089, and Gln1091. At Thr1177 the chain carries Phosphothreonine. Phosphoserine occurs at positions 1179 and 1181.

It belongs to the NOS family. In terms of assembly, homodimer. Interacts with NOSIP and NOSTRIN. Interacts with HSP90AB1. Forms a complex with ASL, ASS1 and SLC7A1; the complex regulates cell-autonomous L-arginine synthesis and citrulline recycling while channeling extracellular L-arginine to nitric oxide synthesis pathway. Heme b serves as cofactor. Requires FAD as cofactor. FMN is required as a cofactor. It depends on (6R)-L-erythro-5,6,7,8-tetrahydrobiopterin as a cofactor.

The protein localises to the membrane. Its subcellular location is the caveola. It is found in the cytoplasm. It localises to the cytoskeleton. The protein resides in the golgi apparatus. The protein localises to the cell membrane. The enzyme catalyses 2 L-arginine + 3 NADPH + 4 O2 + H(+) = 2 L-citrulline + 2 nitric oxide + 3 NADP(+) + 4 H2O. With respect to regulation, stimulated by calcium/calmodulin. Inhibited by NOSIP and NOSTRIN. Produces nitric oxide (NO) which is implicated in vascular smooth muscle relaxation through a cGMP-mediated signal transduction pathway. NO mediates vascular endothelial growth factor (VEGF)-induced angiogenesis in coronary vessels and promotes blood clotting through the activation of platelets. The protein is Nitric oxide synthase 3 (NOS3) of Ovis aries (Sheep).